Consider the following 451-residue polypeptide: MQAWEEFLKAQEVELGLETVQKWLRTLKIQRFDACNLYLEAKDSFQALWFEEHIRNKAQQKFINGNNKRIKIHLSVANTPQRAKKTKTANKEKDFKAPFELTFDELDPLCLFPYFISTEENLLSHQLLLEIAGLSPQIHSTQLGTFNPIYLYGSGGSGKTHLLMSLAHALKAQGLKVIYVRAETFTDHVVTAIRAGEMSVFRQAYRNIDVLLVDDVHVFSRKGATQEEFFHTFNTLHLEGKQIILASECSPQDLQLIEPRLVSRFEWGIVLPLKPLRPGEMRNLLIAKAKALHFELPLKIADYLIETFKSNAKALIKGLEALVLRLHLDAKHSITALSVTATKALLIDLIEEEQKTAITPQKIIQAVAEQYGIRTEDILGKAQTRECALPRQLAMHLCREQLKMPFMKIGDLFSRDHSTVMSSVKSIQKSLEQDDREISGICHIILKKLQG.

Residues 1-68 (MQAWEEFLKA…QQKFINGNNK (68 aa)) form a domain I, interacts with DnaA modulators region. The interval 68–104 (KRIKIHLSVANTPQRAKKTKTANKEKDFKAPFELTFD) is domain II. Positions 105 to 326 (ELDPLCLFPY…KGLEALVLRL (222 aa)) are domain III, AAA+ region. Residues glycine 156, glycine 158, lysine 159, and threonine 160 each contribute to the ATP site. The tract at residues 327-451 (HLDAKHSITA…CHIILKKLQG (125 aa)) is domain IV, binds dsDNA.

Belongs to the DnaA family. As to quaternary structure, oligomerizes as a right-handed, spiral filament on DNA at oriC.

It localises to the cytoplasm. Functionally, plays an essential role in the initiation and regulation of chromosomal replication. ATP-DnaA binds to the origin of replication (oriC) to initiate formation of the DNA replication initiation complex once per cell cycle. Binds the DnaA box (a 9 base pair repeat at the origin) and separates the double-stranded (ds)DNA. Forms a right-handed helical filament on oriC DNA; dsDNA binds to the exterior of the filament while single-stranded (ss)DNA is stabiized in the filament's interior. The ATP-DnaA-oriC complex binds and stabilizes one strand of the AT-rich DNA unwinding element (DUE), permitting loading of DNA polymerase. After initiation quickly degrades to an ADP-DnaA complex that is not apt for DNA replication. Binds acidic phospholipids. The polypeptide is Chromosomal replication initiator protein DnaA 2 (Protochlamydia amoebophila (strain UWE25)).